The following is a 325-amino-acid chain: GTPase Era (325 aa).

Positions 30–198 constitute an Era-type G domain; it reads HCGFVAIVGR…KKHVRDHLPK (169 aa). The tract at residues 38 to 45 is G1; the sequence is GRPNVGKS. 38-45 lines the GTP pocket; it reads GRPNVGKS. The G2 stretch occupies residues 64 to 68; the sequence is QTTRH. The segment at 85–88 is G3; sequence DTPG. GTP-binding positions include 85 to 89 and 147 to 150; these read DTPGL and NKVD. The tract at residues 147–150 is G4; the sequence is NKVD. The G5 stretch occupies residues 177 to 179; that stretch reads ISA. The KH type-2 domain maps to 221 to 307; that stretch reads VREKLMRFTG…YLETWVKVKS (87 aa).

The protein belongs to the TRAFAC class TrmE-Era-EngA-EngB-Septin-like GTPase superfamily. Era GTPase family. In terms of assembly, monomer.

The protein resides in the cytoplasm. Its subcellular location is the cell inner membrane. Functionally, an essential GTPase that binds both GDP and GTP, with rapid nucleotide exchange. Plays a role in 16S rRNA processing and 30S ribosomal subunit biogenesis and possibly also in cell cycle regulation and energy metabolism. This chain is GTPase Era, found in Vibrio cholerae serotype O1 (strain ATCC 39315 / El Tor Inaba N16961).